Consider the following 603-residue polypeptide: Serine/threonine-protein kinase PLK1 (603 aa).

The disordered stretch occupies residues 1–35 (MSAAVTAGKLARAPADPGKAGVPGVAAPGAPAAAP). Position 2 is an N-acetylserine (Ser-2). At Thr-6 the chain carries Phosphothreonine. The span at 13–35 (APADPGKAGVPGVAAPGAPAAAP) shows a compositional bias: low complexity. Residue Lys-19 forms a Glycyl lysine isopeptide (Lys-Gly) (interchain with G-Cter in ubiquitin) linkage. The Protein kinase domain maps to 53–305 (YVRGRFLGKG…INELLNDEFF (253 aa)). ATP is bound by residues 59 to 67 (LGKGGFAKC) and Lys-82. Position 103 is a phosphoserine (Ser-103). Glu-131 provides a ligand contact to ATP. At Ser-137 the chain carries Phosphoserine. Residue Asp-176 is the Proton acceptor of the active site. Residues 178 to 181 (KLGN) and Asp-194 contribute to the ATP site. Residues 194–221 (DFGLATKVEYDGERKKTLCGTPNYIAPE) are activation loop. Thr-210 carries the phosphothreonine; by AURKA modification. At Thr-214 the chain carries Phosphothreonine. Position 269 is a phosphoserine; by autocatalysis (Ser-269). Ser-335 is subject to Phosphoserine. The D-box that targets the protein for proteasomal degradation in anaphase signature appears at 337 to 340 (RKPL). Lys-338 is covalently cross-linked (Glycyl lysine isopeptide (Lys-Gly) (interchain with G-Cter in SUMO2)). The segment at 338–364 (KPLTVLNKGLENPLPERPREKEEPVVR) is disordered. Residues 351-364 (LPERPREKEEPVVR) are compositionally biased toward basic and acidic residues. Ser-375 and Ser-450 each carry phosphoserine. The POLO box 1 domain occupies 410-488 (WVSKWVDYSD…LKYFRNYMSE (79 aa)). A Glycyl lysine isopeptide (Lys-Gly) (interchain with G-Cter in ubiquitin) cross-link involves residue Lys-492. Residues 493-507 (AGANITPREGDELAR) form a linker region. Thr-498 is modified (phosphothreonine). In terms of domain architecture, POLO box 2 spans 510–592 (YLRTWFRTRS…ARTMVDKLLS (83 aa)). Positions 538–540 (HTK) are important for interaction with phosphorylated proteins.

It belongs to the protein kinase superfamily. Ser/Thr protein kinase family. CDC5/Polo subfamily. In terms of assembly, interacts with CEP170. Interacts with EVI5. Interacts with FAM29A. Interacts with SLX4/BTBD12. Interacts with TTDN1. Interacts (via POLO-box domain) with the phosphorylated form of BUB1, CDC25C and CENPU. Interacts with KIF2A. Interacts with CYLD. Part of an astrin (SPAG5)-kinastrin (SKAP) complex containing KNSTRN, SPAG5, PLK1, DYNLL1 and SGO2. Interacts with BIRC6/bruce. Interacts with CDK1-phosphorylated FRY; this interaction occurs in mitotic cells, but not in interphase cells. FRY interaction facilitates AURKA-mediated PLK1 phosphorylation. Interacts with CDK1-phosphorylated DCTN6 during mitotic prometaphase; the interaction facilitates recruitment to kinetochores. Interacts with CEP68; the interaction phosphorylates CEP68. Interacts (via POLO-box domain) with DCTN1. Interacts with CEP20 in later G1, S, G2 and M phases of the cell cycle; this interaction recruits PLK1 to centrosomes, a step required for S phase progression. Interacts with KLHL22. Interacts (via POLO box domains) with NEDD9/HEF1 (via C-terminus). Interacts with FIRRM (via N-terminus region); required for maintaining, but not activating, PLK1 kinase activity. Interacts with FZR1. Interacts with SKA3; the interaction promotes the stability of PLK1; the interaction promotes the stability of PLK1. Interacts with the MTMR3:MTMR4 heterooligomer; brings CEP55 and PLK1 together during early mitosis, regulating the phosphorylation of CEP55 by PLK1 and its recruitment to the midbody where it can mediate cell abscission. Catalytic activity is enhanced by phosphorylation of Thr-210. Phosphorylation at Thr-210 is first detected on centrosomes in the G2 phase of the cell cycle, peaks in prometaphase and gradually disappears from centrosomes during anaphase. Dephosphorylation at Thr-210 at centrosomes is probably mediated by protein phosphatase 1C (PP1C), via interaction with PPP1R12A/MYPT1. Autophosphorylation and phosphorylation of Ser-137 may not be significant for the activation of PLK1 during mitosis, but may enhance catalytic activity during recovery after DNA damage checkpoint. Phosphorylated in vitro by STK10. Post-translationally, ubiquitinated by the anaphase promoting complex/cyclosome (APC/C) in anaphase and following DNA damage, leading to its degradation by the proteasome. Ubiquitination is mediated via its interaction with FZR1/CDH1. Ubiquitination and subsequent degradation prevents entry into mitosis and is essential to maintain an efficient G2 DNA damage checkpoint. Monoubiquitination at Lys-492 by the BCR(KLHL22) ubiquitin ligase complex does not lead to degradation: it promotes PLK1 dissociation from phosphoreceptor proteins and subsequent removal from kinetochores, allowing silencing of the spindle assembly checkpoint (SAC) and chromosome segregation. As to expression, placenta and colon.

The protein localises to the nucleus. It is found in the chromosome. The protein resides in the centromere. It localises to the kinetochore. Its subcellular location is the cytoplasm. The protein localises to the cytoskeleton. It is found in the microtubule organizing center. The protein resides in the centrosome. It localises to the spindle. Its subcellular location is the midbody. The enzyme catalyses L-seryl-[protein] + ATP = O-phospho-L-seryl-[protein] + ADP + H(+). It catalyses the reaction L-threonyl-[protein] + ATP = O-phospho-L-threonyl-[protein] + ADP + H(+). Its activity is regulated as follows. Activated by phosphorylation of Thr-210 by AURKA; phosphorylation by AURKA is enhanced by BORA. Once activated, activity is stimulated by binding target proteins. Binding of target proteins has no effect on the non-activated kinase. Several inhibitors targeting PLKs are currently in development and are under investigation in a growing number of clinical trials, such as BI 2536, an ATP-competitive PLK1 inhibitor or BI 6727, a dihydropteridinone that specifically inhibits the catalytic activity of PLK1. Functionally, serine/threonine-protein kinase that performs several important functions throughout M phase of the cell cycle, including the regulation of centrosome maturation and spindle assembly, the removal of cohesins from chromosome arms, the inactivation of anaphase-promoting complex/cyclosome (APC/C) inhibitors, and the regulation of mitotic exit and cytokinesis. Polo-like kinase proteins act by binding and phosphorylating proteins that are already phosphorylated on a specific motif recognized by the POLO box domains. Phosphorylates BORA, BUB1B/BUBR1, CCNB1, CDC25C, CEP55, ECT2, ERCC6L, FBXO5/EMI1, FOXM1, KIF20A/MKLP2, CENPU, NEDD1, NINL, NPM1, NUDC, PKMYT1/MYT1, KIZ, MRE11, PPP1R12A/MYPT1, POLQ, PRC1, RACGAP1/CYK4, RAD51, RHNO1, SGO1, STAG2/SA2, TEX14, TOPORS, p73/TP73, TPT1, WEE1 and HNRNPU. Plays a key role in centrosome functions and the assembly of bipolar spindles by phosphorylating KIZ, NEDD1 and NINL. NEDD1 phosphorylation promotes subsequent targeting of the gamma-tubulin ring complex (gTuRC) to the centrosome, an important step for spindle formation. Phosphorylation of NINL component of the centrosome leads to NINL dissociation from other centrosomal proteins. Involved in mitosis exit and cytokinesis by phosphorylating CEP55, ECT2, KIF20A/MKLP2, CENPU, PRC1 and RACGAP1. Recruited at the central spindle by phosphorylating and docking PRC1 and KIF20A/MKLP2; creates its own docking sites on PRC1 and KIF20A/MKLP2 by mediating phosphorylation of sites subsequently recognized by the POLO box domains. Phosphorylates RACGAP1, thereby creating a docking site for the Rho GTP exchange factor ECT2 that is essential for the cleavage furrow formation. Promotes the central spindle recruitment of ECT2. Plays a central role in G2/M transition of mitotic cell cycle by phosphorylating CCNB1, CDC25C, FOXM1, CENPU, PKMYT1/MYT1, PPP1R12A/MYPT1 and WEE1. Part of a regulatory circuit that promotes the activation of CDK1 by phosphorylating the positive regulator CDC25C and inhibiting the negative regulators WEE1 and PKMYT1/MYT1. Also acts by mediating phosphorylation of cyclin-B1 (CCNB1) on centrosomes in prophase. Phosphorylates FOXM1, a key mitotic transcription regulator, leading to enhance FOXM1 transcriptional activity. Involved in kinetochore functions and sister chromatid cohesion by phosphorylating BUB1B/BUBR1, FBXO5/EMI1 and STAG2/SA2. PLK1 is high on non-attached kinetochores suggesting a role of PLK1 in kinetochore attachment or in spindle assembly checkpoint (SAC) regulation. Required for kinetochore localization of BUB1B. Regulates the dissociation of cohesin from chromosomes by phosphorylating cohesin subunits such as STAG2/SA2. Phosphorylates SGO1: required for spindle pole localization of isoform 3 of SGO1 and plays a role in regulating its centriole cohesion function. Mediates phosphorylation of FBXO5/EMI1, a negative regulator of the APC/C complex during prophase, leading to FBXO5/EMI1 ubiquitination and degradation by the proteasome. Acts as a negative regulator of p53 family members: phosphorylates TOPORS, leading to inhibit the sumoylation of p53/TP53 and simultaneously enhance the ubiquitination and subsequent degradation of p53/TP53. Phosphorylates the transactivation domain of the transcription factor p73/TP73, leading to inhibit p73/TP73-mediated transcriptional activation and pro-apoptotic functions. Phosphorylates BORA, and thereby promotes the degradation of BORA. Contributes to the regulation of AURKA function. Also required for recovery after DNA damage checkpoint and entry into mitosis. Phosphorylates MISP, leading to stabilization of cortical and astral microtubule attachments required for proper spindle positioning. Together with MEIKIN, acts as a regulator of kinetochore function during meiosis I: required both for mono-orientation of kinetochores on sister chromosomes and protection of centromeric cohesin from separase-mediated cleavage. Phosphorylates CEP68 and is required for its degradation. Regulates nuclear envelope breakdown during prophase by phosphorylating DCTN1 resulting in its localization in the nuclear envelope. Phosphorylates the heat shock transcription factor HSF1, promoting HSF1 nuclear translocation upon heat shock. Phosphorylates HSF1 also in the early mitotic period; this phosphorylation regulates HSF1 localization to the spindle pole, the recruitment of the SCF(BTRC) ubiquitin ligase complex induicing HSF1 degradation, and hence mitotic progression. Regulates mitotic progression by phosphorylating RIOK2. Through the phosphorylation of DZIP1 regulates the localization during mitosis of the BBSome, a ciliary protein complex involved in cilium biogenesis. Regulates DNA repair during mitosis by mediating phosphorylation of POLQ and RHNO1, thereby promoting POLQ recruitment to DNA damage sites. Phosphorylates ATXN10 which may play a role in the regulation of cytokinesis and may stimulate the proteasome-mediated degradation of ATXN10. This Homo sapiens (Human) protein is Serine/threonine-protein kinase PLK1 (PLK1).